The following is an 819-amino-acid chain: DNA topoisomerase 4 subunit A (819 aa).

The Topo IIA-type catalytic domain maps to L30 to L496. The O-(5'-phospho-DNA)-tyrosine intermediate role is filled by Y118.

The protein belongs to the type II topoisomerase GyrA/ParC subunit family. ParC type 2 subfamily. Heterotetramer composed of ParC and ParE.

The protein resides in the cell membrane. The catalysed reaction is ATP-dependent breakage, passage and rejoining of double-stranded DNA.. In terms of biological role, topoisomerase IV is essential for chromosome segregation. It relaxes supercoiled DNA. Performs the decatenation events required during the replication of a circular DNA molecule. This Streptococcus pyogenes serotype M18 (strain MGAS8232) protein is DNA topoisomerase 4 subunit A.